A 505-amino-acid polypeptide reads, in one-letter code: Adenylosuccinate synthetase, chloroplastic (505 aa).

A chloroplast-targeting transit peptide spans 1–60; the sequence is MTTMNISTLRLDSNPITTSTKSTTHRSGALGYNGSYSCRLLQFQKKNKAPSIIVCSTKPL. GTP contacts are provided by residues 92 to 98 and 120 to 122; these read GDEGKGK and GHT. Residue D93 is the Proton acceptor of the active site. Residues D93 and G120 each contribute to the Mg(2+) site. Residues 93-96, 118-121, T210, R224, Q304, T319, and R383 each bind IMP; these read DEGK and NAGH. H121 serves as the catalytic Proton donor. Substrate is bound at residue 379 to 385; it reads TTTGRPR. GTP-binding positions include R385, 411–413, and 494–496; these read KLD and GVG.

The protein belongs to the adenylosuccinate synthetase family. In terms of assembly, homodimer. The cofactor is Mg(2+).

The protein localises to the plastid. It is found in the chloroplast. It catalyses the reaction IMP + L-aspartate + GTP = N(6)-(1,2-dicarboxyethyl)-AMP + GDP + phosphate + 2 H(+). The protein operates within purine metabolism; AMP biosynthesis via de novo pathway; AMP from IMP: step 1/2. Functionally, plays an important role in the de novo pathway and in the salvage pathway of purine nucleotide biosynthesis. Catalyzes the first committed step in the biosynthesis of AMP from IMP. This is Adenylosuccinate synthetase, chloroplastic from Nicotiana tabacum (Common tobacco).